A 138-amino-acid polypeptide reads, in one-letter code: ATP synthase epsilon chain (138 aa).

Belongs to the ATPase epsilon chain family. As to quaternary structure, F-type ATPases have 2 components, CF(1) - the catalytic core - and CF(0) - the membrane proton channel. CF(1) has five subunits: alpha(3), beta(3), gamma(1), delta(1), epsilon(1). CF(0) has three main subunits: a, b and c.

The protein resides in the cell inner membrane. Functionally, produces ATP from ADP in the presence of a proton gradient across the membrane. This chain is ATP synthase epsilon chain, found in Geobacter metallireducens (strain ATCC 53774 / DSM 7210 / GS-15).